Reading from the N-terminus, the 629-residue chain is MDGQAEGSSQYRRVHLPPRSEYRFELEPHERLSIRLVQGRTQSGEDPDAEIFGAELVGGSQERWYPFGDEAKAAVSSWRGAEIEVAGSASTEYLAEEPSPVYTAYSNLHLYLERKRIQARQALRADAKLLTTLASSVLDPSYIAPRTTDPNTETESDPSGTAAATVYRPEGQGPRVMILGPESAGKTSLVKLLANYALRSPAVASLGKGEAAKVAESLRTGGDGIIYPNMEDNLSEEAKKQKREEEKRSDITGWWPVVVNLDPSDGAPPLPCCLSALPLSPLPLASLPSASPAYAFGTNTSTTGAIPPGTSTAHGVAPLSLWLGKENLRENERHFRRVVDWLAEGVERRFARDFRSRMSGLIIDTPGVITADARNKYAFIQHCVKAFKVDTIVVLGHEKLNLEMTKLFASPAVTTVETAEIPGSAGQRLPRVNVIKLPKSGGVVELDETYRSRLKALQVKTYFYGGSTSGSANTDGGVPKPVLPGHSDPLGGVPSLSPYSTTIPFDLLEIYKVGQESLAPSSALPIGASRTVTETQLVKLDPTNSAADQTSLLHSVLALIQPPRGGGGAGQPDSSTNPTDDEIIGAPILGFVHVADIDTVRKKITVLSPSAGRLPSKTAIIGSLDWQDV.

Residues glutamate 21 and lysine 72 each contribute to the ATP site. The disordered stretch occupies residues 142–166; that stretch reads YIAPRTTDPNTETESDPSGTAAATV. Residues 148–159 show a composition bias toward polar residues; it reads TDPNTETESDPS. 183–188 provides a ligand contact to ATP; sequence SAGKTS. The segment at 562 to 582 is disordered; the sequence is PPRGGGGAGQPDSSTNPTDDE.

Belongs to the Clp1 family. Clp1 subfamily. In terms of assembly, component of a pre-mRNA cleavage factor complex. Interacts directly with PCF11.

The protein localises to the nucleus. Required for endonucleolytic cleavage during polyadenylation-dependent pre-mRNA 3'-end formation. This chain is mRNA cleavage and polyadenylation factor CLP1, found in Mycosarcoma maydis (Corn smut fungus).